The primary structure comprises 143 residues: Transcriptional regulator MraZ (143 aa).

2 consecutive SpoVT-AbrB domains span residues 6-49 and 78-121; these read TYNH…NEAE and SDET…DLKV.

Belongs to the MraZ family. Forms oligomers.

It localises to the cytoplasm. It is found in the nucleoid. This Spiroplasma kunkelii protein is Transcriptional regulator MraZ.